Reading from the N-terminus, the 322-residue chain is Ubiquinone biosynthesis O-methyltransferase, mitochondrial (322 aa).

Residues 1–37 (MLASVRVNQLQRLLLSARRLSSSPIIPPSRLLHQRLF) constitute a mitochondrion transit peptide. Residues 46-75 (AASFSSSHPKIQTLEGKASNKSRSTSSTTS) form a disordered region. The S-adenosyl-L-methionine site is built by Arg108, Gly139, Asp160, and Leu205. Glu206, Glu209, and His210 together coordinate Mg(2+).

The protein belongs to the class I-like SAM-binding methyltransferase superfamily. UbiG/COQ3 family. Component of a multi-subunit COQ enzyme complex. Mg(2+) is required as a cofactor.

Its subcellular location is the mitochondrion inner membrane. It catalyses the reaction a 3,4-dihydroxy-5-(all-trans-polyprenyl)benzoate + S-adenosyl-L-methionine = a 4-hydroxy-3-methoxy-5-(all-trans-polyprenyl)benzoate + S-adenosyl-L-homocysteine + H(+). The catalysed reaction is a 3-demethylubiquinone + S-adenosyl-L-methionine = a ubiquinone + S-adenosyl-L-homocysteine. The enzyme catalyses a 3-demethylubiquinol + S-adenosyl-L-methionine = a ubiquinol + S-adenosyl-L-homocysteine + H(+). It functions in the pathway cofactor biosynthesis; ubiquinone biosynthesis. Functionally, O-methyltransferase required for two non-consecutive steps during ubiquinone biosynthesis. Catalyzes the 2 O-methylation of 3,4-dihydroxy-5-(all-trans-polyprenyl)benzoic acid into 4-hydroxy-3-methoxy-5-(all-trans-polyprenyl)benzoic acid. Also catalyzes the last step of ubiquinone biosynthesis by mediating methylation of 3-demethylubiquinone into ubiquinone. Also able to mediate the methylation of 3-demethylubiquinol into ubiquinol. This is Ubiquinone biosynthesis O-methyltransferase, mitochondrial from Arabidopsis thaliana (Mouse-ear cress).